A 390-amino-acid chain; its full sequence is 3-ketoacyl-CoA thiolase (390 aa).

Cys-95 (acyl-thioester intermediate) is an active-site residue. Residues His-346 and Cys-376 each act as proton acceptor in the active site.

This sequence belongs to the thiolase-like superfamily. Thiolase family. Heterotetramer of two alpha chains (FadB) and two beta chains (FadA).

It localises to the cytoplasm. The enzyme catalyses an acyl-CoA + acetyl-CoA = a 3-oxoacyl-CoA + CoA. The protein operates within lipid metabolism; fatty acid beta-oxidation. Its function is as follows. Catalyzes the final step of fatty acid oxidation in which acetyl-CoA is released and the CoA ester of a fatty acid two carbons shorter is formed. The polypeptide is 3-ketoacyl-CoA thiolase (Acinetobacter baumannii (strain AB307-0294)).